A 469-amino-acid polypeptide reads, in one-letter code: 3-isopropylmalate dehydratase large subunit (469 aa).

Residues Cys-350, Cys-410, and Cys-413 each coordinate [4Fe-4S] cluster.

The protein belongs to the aconitase/IPM isomerase family. LeuC type 1 subfamily. As to quaternary structure, heterodimer of LeuC and LeuD. Requires [4Fe-4S] cluster as cofactor.

The enzyme catalyses (2R,3S)-3-isopropylmalate = (2S)-2-isopropylmalate. It functions in the pathway amino-acid biosynthesis; L-leucine biosynthesis; L-leucine from 3-methyl-2-oxobutanoate: step 2/4. Catalyzes the isomerization between 2-isopropylmalate and 3-isopropylmalate, via the formation of 2-isopropylmaleate. The sequence is that of 3-isopropylmalate dehydratase large subunit from Rhizobium johnstonii (strain DSM 114642 / LMG 32736 / 3841) (Rhizobium leguminosarum bv. viciae).